Consider the following 37-residue polypeptide: Large ribosomal subunit protein bL36c (37 aa).

Belongs to the bacterial ribosomal protein bL36 family.

Its subcellular location is the plastid. The protein resides in the chloroplast. The sequence is that of Large ribosomal subunit protein bL36c from Acorus calamus (Sweet flag).